Consider the following 128-residue polypeptide: Sm-like protein LSM1B (128 aa).

A Sm domain is found at 10–85 (YLSTSLASYL…VVLIGELDTE (76 aa)).

The protein belongs to the snRNP Sm proteins family. In terms of assembly, component of the heptameric LSM1-LSM7 complex that forms a seven-membered ring structure with a donut shape. The LSM subunits are arranged in the order LSM1, LSM2, LSM3, LSM6, LSM5, LSM7 and LSM4. LSM1B subunit interacts only with its two neighboring subunits, LSM2 and LSM4. Expressed in roots, leaves, stems, flowers and siliques.

The protein resides in the cytoplasm. Its subcellular location is the P-body. Functionally, component of the cytoplasmic LSM1-LSM7 complex which is involved in mRNA degradation by promoting decapping and leading to accurate 5'-3' mRNA decay. LSM1A and LSM1B are essential for the formation of the cytoplasmic LSM1-LSM7 complex which regulates developmental gene expression by the decapping of specific development-related transcripts. Required for P-body formation during heat stress. This is Sm-like protein LSM1B from Arabidopsis thaliana (Mouse-ear cress).